The sequence spans 479 residues: Aspartyl/glutamyl-tRNA(Asn/Gln) amidotransferase subunit B (479 aa).

This sequence belongs to the GatB/GatE family. GatB subfamily. In terms of assembly, heterotrimer of A, B and C subunits.

The catalysed reaction is L-glutamyl-tRNA(Gln) + L-glutamine + ATP + H2O = L-glutaminyl-tRNA(Gln) + L-glutamate + ADP + phosphate + H(+). The enzyme catalyses L-aspartyl-tRNA(Asn) + L-glutamine + ATP + H2O = L-asparaginyl-tRNA(Asn) + L-glutamate + ADP + phosphate + 2 H(+). Functionally, allows the formation of correctly charged Asn-tRNA(Asn) or Gln-tRNA(Gln) through the transamidation of misacylated Asp-tRNA(Asn) or Glu-tRNA(Gln) in organisms which lack either or both of asparaginyl-tRNA or glutaminyl-tRNA synthetases. The reaction takes place in the presence of glutamine and ATP through an activated phospho-Asp-tRNA(Asn) or phospho-Glu-tRNA(Gln). The protein is Aspartyl/glutamyl-tRNA(Asn/Gln) amidotransferase subunit B of Streptococcus pyogenes serotype M3 (strain ATCC BAA-595 / MGAS315).